A 472-amino-acid polypeptide reads, in one-letter code: Arginine biosynthesis bifunctional protein ArgJ, mitochondrial (472 aa).

T200, K229, T240, E327, N467, and T472 together coordinate substrate. The active-site Nucleophile is T240.

Belongs to the ArgJ family. As to quaternary structure, heterodimer of an alpha and a beta chain. The alpha and beta chains are autoproteolytically processed from a single precursor protein within the mitochondrion.

The protein localises to the mitochondrion matrix. It catalyses the reaction N(2)-acetyl-L-ornithine + L-glutamate = N-acetyl-L-glutamate + L-ornithine. The enzyme catalyses L-glutamate + acetyl-CoA = N-acetyl-L-glutamate + CoA + H(+). Its pathway is amino-acid biosynthesis; L-arginine biosynthesis; L-ornithine and N-acetyl-L-glutamate from L-glutamate and N(2)-acetyl-L-ornithine (cyclic): step 1/1. It participates in amino-acid biosynthesis; L-arginine biosynthesis; N(2)-acetyl-L-ornithine from L-glutamate: step 1/4. In terms of biological role, catalyzes two activities which are involved in the cyclic version of arginine biosynthesis: the synthesis of acetylglutamate from glutamate and acetyl-CoA, and of ornithine by transacetylation between acetylornithine and glutamate. The sequence is that of Arginine biosynthesis bifunctional protein ArgJ, mitochondrial from Talaromyces marneffei (strain ATCC 18224 / CBS 334.59 / QM 7333) (Penicillium marneffei).